Here is a 950-residue protein sequence, read N- to C-terminus: A disintegrin and metalloproteinase with thrombospondin motifs 15 (950 aa).

Residues 1–18 (MLLLGISILALAWRPAGS) form the signal peptide. Positions 19 to 212 (SEPEWEVVVP…NRRRSGRAKR (194 aa)) are excised as a propeptide. The N-linked (GlcNAc...) asparagine glycan is linked to Asn141. Residues 144–172 (APEAQRHSQGAHLLQRRGAPVGPSGDPTS) form a disordered region. Residues 172-179 (SRCGVASG) carry the Cysteine switch motif. Residue Cys174 participates in Zn(2+) binding. A Peptidase M12B domain is found at 218-427 (RYVETLVVAD…GHGDCLLDQP (210 aa)). 11 disulfides stabilise this stretch: Cys293–Cys345, Cys322–Cys327, Cys339–Cys422, Cys377–Cys406, Cys448–Cys470, Cys459–Cys480, Cys465–Cys499, Cys493–Cys504, Cys528–Cys565, Cys532–Cys570, and Cys543–Cys555. His361 is a Zn(2+) binding site. Glu362 is an active-site residue. Residues His365 and His371 each coordinate Zn(2+). The 88-residue stretch at 428–515 (SKPITLPEDL…ERHNPNKYRV (88 aa)) folds into the Disintegrin domain. In terms of domain architecture, TSP type-1 1 spans 516-571 (DGSWAKWEPYGSCSRTCGGGVQLARRQCSNPTPANGGKYCEGVRVKYRSCNLEPCP). N-linked (GlcNAc...) asparagine glycosylation is found at Asn591, Asn623, and Asn679. A spacer region spans residues 701-838 (AIPAGASSID…SNQVEQPDNR (138 aa)). Residues 798 to 822 (FYLPKEPREDKSTRPKDPRGSPVLR) are disordered. The span at 802–816 (KEPREDKSTRPKDPR) shows a compositional bias: basic and acidic residues. TSP type-1 domains are found at residues 839 to 895 (PPAR…EPCP) and 896 to 949 (TWEL…VLRP).

Requires Zn(2+) as cofactor. Post-translationally, the precursor is cleaved by a furin endopeptidase. Glycosylated. Can be O-fucosylated by POFUT2 on a serine or a threonine residue found within the consensus sequence C1-X(2)-(S/T)-C2-G of the TSP type-1 repeat domains where C1 and C2 are the first and second cysteine residue of the repeat, respectively. Fucosylated repeats can then be further glycosylated by the addition of a beta-1,3-glucose residue by the glucosyltransferase, B3GALTL. Fucosylation mediates the efficient secretion of ADAMTS family members. Can be C-glycosylated with one or two mannose molecules on tryptophan residues within the consensus sequence W-X-X-W of the TPRs. Also N-glycosylated. These other glycosylations can also facilitate secretion. In the adult colon, highly expressed in the muscularis externa (inner circular smooth muscle and outer longitudinal smooth muscle), muscularis mucosa, submucosal glands, crypt, villi epithelial cells, goblet cells and lamina propria. Expressed at perimuscular and peritendious areas in the developing limbs.

It is found in the secreted. Its subcellular location is the extracellular space. It localises to the extracellular matrix. The protein localises to the cell surface. Metalloprotease which has proteolytic activity against the proteoglycan VCAN, cleaving it at the 'Glu-1401-|-1402-Ala' site. Cleaves VCAN in the pericellular matrix surrounding myoblasts, facilitating myoblast contact and fusion which is required for skeletal muscle development and regeneration. This Mus musculus (Mouse) protein is A disintegrin and metalloproteinase with thrombospondin motifs 15 (Adamts15).